Here is a 357-residue protein sequence, read N- to C-terminus: uncharacterized protein (357 aa).

This is an uncharacterized protein from Mycoplasma pneumoniae (strain ATCC 29342 / M129 / Subtype 1) (Mycoplasmoides pneumoniae).